A 1838-amino-acid chain; its full sequence is Collagen alpha-1(V) chain (1838 aa).

Positions 1–37 are cleaved as a signal peptide; that stretch reads MDVHTRWKARSALRPGAPLLPPLLLLLLWAPPPSRAA. The region spanning 72-244 is the Laminin G-like domain; that stretch reads DVAYRVTKDA…DYCEHYSPDC (173 aa). The tract at residues 231–443 is nonhelical region; it reads RAAYDYCEHY…MPANQDTIYE (213 aa). A sulfotyrosine mark is found at Tyr234, Tyr236, Tyr240, Tyr262, and Tyr263. Disordered stretches follow at residues 242–269, 281–457, 470–520, 526–545, and 559–1574; these read PDCDTAVPDTPQSQDPNPDEYYTEGDGE, EDPE…QKGE, PPGP…GTML, FGGGGDAGSKGPMVSAQESQ, and GPAG…EVIQ. Acidic residues predominate over residues 258–269; sequence NPDEYYTEGDGE. The span at 285–304 shows a compositional bias: basic and acidic residues; it reads DLGKEPTPSKKPVEAAKETT. Residues 309–323 show a composition bias toward low complexity; the sequence is ELTPTPTEAAPMPET. Residues Tyr338, Tyr340, Tyr346, and Tyr347 each carry the sulfotyrosine modification. The span at 377–388 shows a compositional bias: polar residues; the sequence is PTSTADTSNSSN. Residues 396–406 are compositionally biased toward acidic residues; that stretch reads GADDLEGEFTE. Tyr416, Tyr417, Tyr420, and Tyr421 each carry sulfotyrosine. The segment covering 417-428 has biased composition (low complexity); it reads YDPYYDPTSSPS. Positions 444 to 558 are interrupted collagenous region; sequence GIGGPRGEKG…ILQQARLALR (115 aa). Over residues 470–485 the composition is skewed to pro residues; that stretch reads PPGPEGPAGLPGPPGT. Over residues 506–520 the composition is skewed to low complexity; the sequence is LPGADGLPGPPGTML. A triple-helical region region spans residues 559 to 1570; that stretch reads GPAGPMGLTG…GPPGPPGPPG (1012 aa). A hydroxyproline mark is found at Pro570 and Pro576. The span at 587–597 shows a compositional bias: low complexity; the sequence is DVGPQGPRGVQ. Pro621 is subject to Hydroxyproline. 5-hydroxylysine is present on Lys627. Pro639 carries the post-translational modification Hydroxyproline. Lys642 carries the 5-hydroxylysine modification. Residues Pro648, Pro654, Pro657, Pro675, and Pro678 each carry the hydroxyproline modification. Low complexity predominate over residues 671–686; sequence PRGLPGEPGPRGLLGP. Lys687 is modified (5-hydroxylysine). Residues 687–696 show a composition bias toward pro residues; that stretch reads KGPPGPPGPP. Hydroxyproline occurs at positions 690, 696, and 705. The residue at position 708 (Lys708) is a 5-hydroxylysine. Hydroxyproline is present on residues Pro717, Pro720, Pro726, and Pro732. Low complexity predominate over residues 722 to 741; the sequence is QQGNPGAQGLPGPQGAIGPP. The residue at position 744 (Lys744) is a 5-hydroxylysine. Over residues 747–756 the composition is skewed to low complexity; the sequence is LGKPGLPGMP. Residues Pro750, Pro756, Pro762, Pro765, and Pro771 each carry the hydroxyproline modification. The residue at position 774 (Lys774) is a 5-hydroxylysine. Residues Pro780 and Pro789 each carry the hydroxyproline modification. Residues Lys795, Lys804, Lys807, and Lys810 each carry the 5-hydroxylysine modification. A Hydroxyproline modification is found at Pro816. The residue at position 819 (Lys819) is a 5-hydroxylysine. Residue Pro834 is modified to Hydroxyproline. Residues 837–846 show a composition bias toward basic and acidic residues; that stretch reads RGEDGPEGPK. Position 846 is a 5-hydroxylysine (Lys846). Pro861 carries the hydroxyproline modification. Lys864 is modified (5-hydroxylysine). The span at 867-876 shows a compositional bias: low complexity; sequence LGVPGLPGYP. Pro870, Pro873, and Pro876 each carry hydroxyproline. Residue Lys882 is modified to 5-hydroxylysine. Pro888 and Pro891 each carry hydroxyproline. A 5-hydroxylysine modification is found at Lys897. Residues Pro903 and Pro906 each carry the hydroxyproline modification. Positions 908 to 917 are enriched in low complexity; it reads PRGQRGPTGP. Hydroxyproline occurs at positions 930 and 945. Low complexity-rich tracts occupy residues 971-990 and 999-1011; these read KDGLPGHPGQRGETGFQGKT and VGPQGPTGETGPM. A hydroxyproline mark is found at Pro1017, Pro1020, Pro1023, and Pro1029. The span at 1088 to 1104 shows a compositional bias: low complexity; that stretch reads SPGERGPAGAAGPIGIP. A compositionally biased stretch (pro residues) spans 1106-1115; that stretch reads RPGPQGPPGP. Over residues 1116–1140 the composition is skewed to low complexity; sequence AGEKGAPGEKGPQGPAGRDGLQGPV. Pro1221 and Pro1224 each carry hydroxyproline. Positions 1259 to 1268 are enriched in low complexity; that stretch reads PSGAPGADGP. Composition is skewed to pro residues over residues 1380-1398 and 1454-1469; these read TGEPGPSGPPGKRGPPGPA and SPGPDGPPGPMGPPGL. 2 positions are modified to hydroxyproline: Pro1467 and Pro1470. Low complexity predominate over residues 1485 to 1494; that stretch reads PGLIGLIGPP. Pro residues predominate over residues 1526–1541; it reads PIGPPGPPGLPGPPGP. Low complexity predominate over residues 1542 to 1554; it reads KGAKGSSGPTGPK. Pro residues predominate over residues 1560-1569; sequence PGPPGPPGPP. The tract at residues 1571 to 1605 is nonhelical region; it reads EVIQPLPIQASRTRRNIDASQLLDDGNGENYVDYA. 2 positions are modified to sulfotyrosine: Tyr1601 and Tyr1604. The propeptide at 1606-1838 is C-terminal propeptide; that stretch reads DGMEEIFGSL…FEVGPACFMG (233 aa). A Fibrillar collagen NC1 domain is found at 1609-1837; the sequence is EEIFGSLNSL…GFEVGPACFM (229 aa). Cystine bridges form between Cys1639–Cys1671, Cys1680–Cys1835, and Cys1746–Cys1789. Residues Asp1657, Asn1659, Gln1660, Cys1662, and Asp1665 each contribute to the Ca(2+) site.

This sequence belongs to the fibrillar collagen family. As to quaternary structure, trimers of two alpha 1(V) and one alpha 2(V) chains in most tissues and trimers of one alpha 1(V), one alpha 2(V), and one alpha 3(V) chains in placenta. Interacts with CSPG4. Prolines at the third position of the tripeptide repeating unit (G-X-Y) are hydroxylated in some or all of the chains. Post-translationally, sulfated on 40% of tyrosines.

The protein resides in the secreted. It localises to the extracellular space. It is found in the extracellular matrix. Functionally, type V collagen is a member of group I collagen (fibrillar forming collagen). It is a minor connective tissue component of nearly ubiquitous distribution. Type V collagen binds to DNA, heparan sulfate, thrombospondin, heparin, and insulin. This is Collagen alpha-1(V) chain (COL5A1) from Homo sapiens (Human).